Here is a 655-residue protein sequence, read N- to C-terminus: MVAPKSHTDDWAPGPFSSKPQRSQLQIFSSVLQTSLLFLLMGLRASGKDSAPTVVSGILGGSVTLPLNISVDTEIENVIWIGPKNALAFARPKENVTIMVKSYLGRLDITKWSYSLCISNLTLNDAGSYKAQINQRNFEVTTEEEFTLFVYEQLQEPQVTMKSVKVSENFSCNITLMCSVKGAEKSVLYSWTPREPHASESNGGSILTVSRTPCDPDLPYICTAQNPVSQRSSLPVHVGQFCTDPGASRGGTTGETVVGVLGEPVTLPLALPACRDTEKVVWLFNTSIISKEREEAATADPLIKSRDPYKNRVWVSSQDCSLKISQLKIEDAGPYHAYVCSEASSVTSMTHVTLLIYRRLRKPKITWSLRHSEDGICRISLTCSVEDGGNTVMYTWTPLQKEAVVSQGESHLNVSWRSSENHPNLTCTASNPVSRSSHQFLSENICSGPERNTKLWIGLFLMVCLLCVGIFSWCIWKRKGRCSVPAFCSSQAEAPADTPEPTAGHTLYSVLSQGYEKLDTPLRPARQQPTPTSDSSSDSNLTTEEDEDRPEVHKPISGRYEVFDQVTQEGAGHDPAPEGQADYDPVTPYVTEVESVVGENTMYAQVFNLQGKTPVSQKEESSATIYCSIRKPQVVPPPQQNDLEIPESPTYENFT.

Residues Met-1–Gly-47 form the signal peptide. Residues Lys-48–Gln-158 enclose the Ig-like V-type 1 domain. The Extracellular segment spans residues Lys-48–Lys-454. N-linked (GlcNAc...) asparagine glycans are attached at residues Asn-68, Asn-95, Asn-120, Asn-169, and Asn-173. Positions Val-159 to Pro-235 constitute an Ig-like C2-type 1 domain. 2 cysteine pairs are disulfide-bonded: Cys-172-Cys-242 and Cys-178-Cys-222. The region spanning Gly-251–Pro-363 is the Ig-like V-type 2 domain. Asn-285, Asn-413, and Asn-424 each carry an N-linked (GlcNAc...) asparagine glycan. Residues Lys-364 to Asn-452 form the Ig-like C2-type 2 domain. 2 disulfides stabilise this stretch: Cys-377–Cys-446 and Cys-383–Cys-427. Residues Leu-455–Trp-476 form a helical membrane-spanning segment. Residues Lys-477 to Thr-655 lie on the Cytoplasmic side of the membrane. Residues Pro-521–Ile-556 form a disordered region. Residues Thr-530 to Thr-542 show a composition bias toward low complexity. Short sequence motifs (ITSM) lie at residues Thr-601–Val-606 and Thr-624–Ile-629. Tyr-603 is modified (phosphotyrosine). Positions Gln-633 to Thr-655 are disordered.

Interacts with SH2D1A, SH2D1B and INPP5D. Interacts (via phosphorylated cytoplasmic domain) with PTPN11; the interaction is blocked by SH2D1A. Increased surface expression on T-cells of systemic lupus erythematosus (SLE) patients.

Its subcellular location is the membrane. It is found in the cell membrane. Its function is as follows. Self-ligand receptor of the signaling lymphocytic activation molecule (SLAM) family. SLAM receptors triggered by homo- or heterotypic cell-cell interactions are modulating the activation and differentiation of a wide variety of immune cells and thus are involved in the regulation and interconnection of both innate and adaptive immune response. Activities are controlled by presence or absence of small cytoplasmic adapter proteins, SH2D1A/SAP and/or SH2D1B/EAT-2. May participate in adhesion reactions between T lymphocytes and accessory cells by homophilic interaction. Promotes T-cell differentiation into a helper T-cell Th17 phenotype leading to increased IL-17 secretion; the costimulatory activity requires SH2D1A. Promotes recruitment of RORC to the IL-17 promoter. May be involved in the maintenance of peripheral cell tolerance by serving as a negative regulator of the immune response. May disable autoantibody responses and inhibit IFN-gamma secretion by CD4(+) T-cells. May negatively regulate the size of thymic innate CD8(+) T-cells and the development of invariant natural killer T (iNKT) cells. This is T-lymphocyte surface antigen Ly-9 (LY9) from Homo sapiens (Human).